Here is a 260-residue protein sequence, read N- to C-terminus: UPF0246 protein APP7_0648 (260 aa).

The protein belongs to the UPF0246 family.

This is UPF0246 protein APP7_0648 from Actinobacillus pleuropneumoniae serotype 7 (strain AP76).